The following is a 668-amino-acid chain: Tyrosine-protein phosphatase non-receptor type ptp-2 (668 aa).

SH2 domains follow at residues 10-113 and 134-232; these read NFYY…KKPV and WWHG…EEPL. Residues 264 to 580 enclose the Tyrosine-protein phosphatase domain; the sequence is ISEEFDRLSQ…QFLYKALAFY (317 aa). The active-site Phosphocysteine intermediate is the cysteine 518. A disordered region spans residues 603 to 668; the sequence is PRRLRPTPNA…SSTLLKSTKK (66 aa). 2 stretches are compositionally biased toward low complexity: residues 616-634 and 652-668; these read SSAR…SSRT and STSS…STKK.

It belongs to the protein-tyrosine phosphatase family. Non-receptor class 2 subfamily. Expressed in embryonic cells, developing vulva, body wall muscles, head neurons and gonadal sheath cells.

The protein resides in the cytoplasm. It carries out the reaction O-phospho-L-tyrosyl-[protein] + H2O = L-tyrosyl-[protein] + phosphate. In terms of biological role, involved in embryonic and larval development. Plays a role in oogenesis by regulating mpk-1 phosphorylation and oocyte maturation in response to major sperm protein (MSP). During the formation of neuromuscular junctions at the larval stage, negatively regulates membrane protrusion from body wall muscles probably downstream of receptor egl-15. Plays a role in fluid homeostasis probably downstream of receptor egl-15 and adapter soc-1. Promotes vulva induction and negatively regulates fertility probably downstream of receptor let-23. Negatively regulates daf-2-mediated repression of dauer formation. The protein is Tyrosine-protein phosphatase non-receptor type ptp-2 of Caenorhabditis elegans.